Consider the following 625-residue polypeptide: Probable inactive receptor kinase At5g16590 (625 aa).

Residues 1–23 (MKNKTNLGLSVFFFFICLVSVTS) form the signal peptide. LRR repeat units lie at residues 88 to 111 (KLETLSFRFNALNGPLPPDFANLT), 112 to 134 (LLRYLYLQGNAFSGEIPSFLFTL), 136 to 158 (NIIRINLAQNNFLGRIPDNVNSA), 160 to 182 (RLATLYLQDNQLTGPIPEIKIKL), and 183 to 204 (QQFNVSSNQLNGSIPDPLSGMP). Residues 246 to 266 (AIVGIVIGCFVLLLVLFLIVF) form a helical membrane-spanning segment. The Protein kinase domain maps to 343-613 (KASAEVLGKG…PEVTRLIEEV (271 aa)). Phosphoserine is present on S345. ATP contacts are provided by residues 349–357 (LGKGTFGSS) and K371. The residue at position 422 (S422) is a Phosphoserine. T442 and T496 each carry phosphothreonine. The residue at position 517 (S517) is a Phosphoserine. T593 is modified (phosphothreonine). Phosphoserine occurs at positions 619 and 624.

This sequence belongs to the protein kinase superfamily. Ser/Thr protein kinase family.

Its subcellular location is the cell membrane. Its function is as follows. Might be involved in early recognition of growth promoting fungi. Appears to be specific for P.indica. The sequence is that of Probable inactive receptor kinase At5g16590 from Arabidopsis thaliana (Mouse-ear cress).